Consider the following 136-residue polypeptide: ATP synthase epsilon chain, chloroplastic (136 aa).

This sequence belongs to the ATPase epsilon chain family. As to quaternary structure, F-type ATPases have 2 components, CF(1) - the catalytic core - and CF(0) - the membrane proton channel. CF(1) has five subunits: alpha(3), beta(3), gamma(1), delta(1), epsilon(1). CF(0) has three main subunits: a, b and c.

Its subcellular location is the plastid. It is found in the chloroplast thylakoid membrane. Produces ATP from ADP in the presence of a proton gradient across the membrane. The polypeptide is ATP synthase epsilon chain, chloroplastic (Chaetosphaeridium globosum (Charophycean green alga)).